Here is a 540-residue protein sequence, read N- to C-terminus: 2,3-bisphosphoglycerate-independent phosphoglycerate mutase (540 aa).

The Mn(2+) site is built by Asp-24 and Ser-74. Ser-74 (phosphoserine intermediate) is an active-site residue. Substrate is bound by residues His-135, 165–166 (RD), Arg-197, Arg-203, 268–271 (RPDR), and Lys-341. Mn(2+) contacts are provided by Asp-408, His-412, Asp-449, His-450, and His-467.

It belongs to the BPG-independent phosphoglycerate mutase family. In terms of assembly, monomer. Mn(2+) serves as cofactor.

The enzyme catalyses (2R)-2-phosphoglycerate = (2R)-3-phosphoglycerate. It participates in carbohydrate degradation; glycolysis; pyruvate from D-glyceraldehyde 3-phosphate: step 3/5. Catalyzes the interconversion of 2-phosphoglycerate and 3-phosphoglycerate. This chain is 2,3-bisphosphoglycerate-independent phosphoglycerate mutase, found in Prochlorococcus marinus (strain SARG / CCMP1375 / SS120).